The primary structure comprises 391 residues: Paired box protein Pax-5 (391 aa).

Residues 1-21 form a disordered region; it reads MDLEKNYPTPRTSRTGHGGVN. Positions 16 to 142 form a DNA-binding region, paired; that stretch reads GHGGVNQLGG…SSINRIIRTK (127 aa). Residues 19–75 are PAI subdomain; sequence GVNQLGGVFVNGRPLPDVVRQRIVELAHQGVRPCDISRQLRVSHGCVSKILGRYYET. Residues 94–142 form an RED subdomain region; it reads KVVEKIAEYKRQNPTMFAWEIRDRLLAERVCDNDTVPSVSSINRIIRTK. Residues 182-218 are disordered; that stretch reads SGILGITSPSADTNKRKRDEGIQESPVPNGHSLPGRD.

Interacts with ETS1; this interaction alters PAX5 DNA-binding properties. Binds DNA as a monomer. Interacts with TBP; this interaction allows PAX5 to interact with the basal transcription machinery. Interacts with RB1. Interacts with TLE4. Interacts with DAXX. In terms of assembly, (Microbial infection) Interacts (via N-terminus) with Epstein-Barr virus protein BZLF1 (via C-terminus); this interaction inhibits BZLF1-mediated lytic viral reactivation. Interacts also with EBNA1; this interaction promotes EBNA1-dependent transcription. In terms of processing, O-glycosylated. Phosphorylated by SYK. This phosphorylation plays an important role in the abolition of BLIMP1 repression by PAX5 in order to trigger plasma cell differentiation.

The protein localises to the nucleus. Its function is as follows. Transcription factor that plays an essential role in commitment of lymphoid progenitors to the B-lymphocyte lineage. Fulfills a dual role by repressing B-lineage inappropriate genes and simultaneously activating B-lineage-specific genes. In turn, regulates cell adhesion and migration, induces V(H)-to-D(H)J(H) recombination, facilitates pre-B-cell receptor signaling and promotes development to the mature B-cell stage. Repression of the cohesin-release factor WAPL causes global changes of the chromosomal architecture in pro-B cells to facilitate the generation of a diverse antibody repertoire. In terms of biological role, (Microbial infection) Plays an essential role in the maintenance of Epstein-Barr virus genome copy number within the host cell by promoting EBNA1/oriP-dependent binding and transcription. Also participates in the inhibition of lytic EBV reactivation by modulating viral BZLF1 activity. The chain is Paired box protein Pax-5 (PAX5) from Homo sapiens (Human).